A 428-amino-acid chain; its full sequence is Enolase (428 aa).

Glutamine 163 is a (2R)-2-phosphoglycerate binding site. The active-site Proton donor is the glutamate 205. Aspartate 242, glutamate 286, and aspartate 313 together coordinate Mg(2+). (2R)-2-phosphoglycerate contacts are provided by lysine 338, arginine 367, serine 368, and lysine 389. Lysine 338 (proton acceptor) is an active-site residue.

Belongs to the enolase family. Mg(2+) serves as cofactor.

It localises to the cytoplasm. Its subcellular location is the secreted. It is found in the cell surface. The enzyme catalyses (2R)-2-phosphoglycerate = phosphoenolpyruvate + H2O. Its pathway is carbohydrate degradation; glycolysis; pyruvate from D-glyceraldehyde 3-phosphate: step 4/5. Catalyzes the reversible conversion of 2-phosphoglycerate (2-PG) into phosphoenolpyruvate (PEP). It is essential for the degradation of carbohydrates via glycolysis. The sequence is that of Enolase from Bordetella petrii (strain ATCC BAA-461 / DSM 12804 / CCUG 43448).